Reading from the N-terminus, the 158-residue chain is 6,7-dimethyl-8-ribityllumazine synthase (158 aa).

5-amino-6-(D-ribitylamino)uracil contacts are provided by residues Phe-24, 58–60 (AFE), and 82–84 (AVI). 87 to 88 (GT) contributes to the (2S)-2-hydroxy-3-oxobutyl phosphate binding site. His-90 serves as the catalytic Proton donor. Phe-115 contributes to the 5-amino-6-(D-ribitylamino)uracil binding site. (2S)-2-hydroxy-3-oxobutyl phosphate is bound at residue Arg-129.

The protein belongs to the DMRL synthase family. Forms an icosahedral capsid composed of 60 subunits, arranged as a dodecamer of pentamers.

It carries out the reaction (2S)-2-hydroxy-3-oxobutyl phosphate + 5-amino-6-(D-ribitylamino)uracil = 6,7-dimethyl-8-(1-D-ribityl)lumazine + phosphate + 2 H2O + H(+). It participates in cofactor biosynthesis; riboflavin biosynthesis; riboflavin from 2-hydroxy-3-oxobutyl phosphate and 5-amino-6-(D-ribitylamino)uracil: step 1/2. Catalyzes the formation of 6,7-dimethyl-8-ribityllumazine by condensation of 5-amino-6-(D-ribitylamino)uracil with 3,4-dihydroxy-2-butanone 4-phosphate. This is the penultimate step in the biosynthesis of riboflavin. The sequence is that of 6,7-dimethyl-8-ribityllumazine synthase from Stutzerimonas stutzeri (strain A1501) (Pseudomonas stutzeri).